Here is a 120-residue protein sequence, read N- to C-terminus: Seripauperin-4 (120 aa).

A helical transmembrane segment spans residues 7–24; it reads IAAGVAAIAATASATTTI.

It belongs to the SRP1/TIP1 family. Seripauperin subfamily.

The protein resides in the membrane. In Saccharomyces cerevisiae (strain ATCC 204508 / S288c) (Baker's yeast), this protein is Seripauperin-4 (PAU4).